We begin with the raw amino-acid sequence, 134 residues long: UPF0719 transmembrane protein YshE (134 aa).

Helical transmembrane passes span 10–30 (VEIA…LTVF), 48–68 (AVAM…QHSI), 78–98 (IGWG…FEFL), and 114–134 (AVGF…AAGI).

It belongs to the UPF0719 family.

The protein resides in the cell membrane. The polypeptide is UPF0719 transmembrane protein YshE (yshE) (Bacillus subtilis (strain 168)).